The following is a 182-amino-acid chain: Adenylate kinase isoenzyme 6 homolog (182 aa).

Residues 1-20 (MATPETRRRPNILVTGSPGT) are disordered. ATP contacts are provided by glycine 19, glycine 21, lysine 22, serine 23, and threonine 24. The interval 39–62 (EVSKEVRENNLQGDFDEQYNCHVL) is NMPbind. The LID stretch occupies residues 116-126 (SRGYSEFKIKE). ATP is bound at residue arginine 117.

The protein belongs to the adenylate kinase family. AK6 subfamily. In terms of assembly, monomer and homodimer. Interacts with small ribosomal subunit protein uS11. Not a structural component of 43S pre-ribosomes, but transiently interacts with them by binding to uS11.

It localises to the cytoplasm. Its subcellular location is the nucleus. It catalyses the reaction AMP + ATP = 2 ADP. The enzyme catalyses ATP + H2O = ADP + phosphate + H(+). In terms of biological role, broad-specificity nucleoside monophosphate (NMP) kinase that catalyzes the reversible transfer of the terminal phosphate group between nucleoside triphosphates and monophosphates. Also has ATPase activity. Involved in the late cytoplasmic maturation steps of the 40S ribosomal particles, specifically 18S rRNA maturation. While NMP activity is not required for ribosome maturation, ATPase activity is. Associates transiently with small ribosomal subunit protein uS11. ATP hydrolysis breaks the interaction with uS11. May temporarily remove uS11 from the ribosome to enable a conformational change of the ribosomal RNA that is needed for the final maturation step of the small ribosomal subunit. Its NMP activity may have a role in nuclear energy homeostasis. AMP and dAMP are the preferred substrates, but CMP and TMP are also good substrates. ATP and dATP are the best phosphate donors. This Caenorhabditis elegans protein is Adenylate kinase isoenzyme 6 homolog.